A 231-amino-acid polypeptide reads, in one-letter code: Eukaryotic translation initiation factor 4E allele Eva1 (231 aa).

Residues Met1 to Ala20 show a composition bias toward basic and acidic residues. Residues Met1–Glu34 form a disordered region. 2 EIF4G-binding regions span residues His56–Glu59 and Phe66–His102. MRNA is bound by residues Arg74 to Gly79, Lys106, and Trp124 to Glu125. Cysteines 129 and 167 form a disulfide. The segment at Tyr150–Gln159 is EIF4G-binding. Residues Arg174 to Lys179 and Lys219 to Arg223 each bind mRNA.

The protein belongs to the eukaryotic initiation factor 4E family. EIF4F is a multi-subunit complex, the composition of which varies with external and internal environmental conditions. It is composed of at least EIF4A, EIF4E and EIF4G. EIF4E is also known to interact with other partners. In higher plants two isoforms of EIF4F have been identified, named isoform EIF4F and isoform EIF(iso)4F. Isoform EIF4F has subunits p220 and p26, whereas isoform EIF(iso)4F has subunits p82 and p28. As to quaternary structure, (Microbial infection) Interacts with potyvirus viral genome-linked protein (VPg); this interaction is possible in susceptible hosts but impaired in resistant plants. In terms of processing, according to the redox status, the Cys-129-Cys-167 disulfide bridge may have a role in regulating protein function by affecting its ability to bind capped mRNA.

Its subcellular location is the nucleus. It localises to the cytoplasm. In terms of biological role, component of the protein complex eIF4F, which is involved in the recognition of the mRNA cap, ATP-dependent unwinding of 5'-terminal secondary structure and recruitment of mRNA to the ribosome. Recognizes and binds the 7-methylguanosine-containing mRNA cap during an early step in the initiation of protein synthesis and facilitates ribosome binding by inducing the unwinding of the mRNAs secondary structures. Key component of recessive resistance to potyviruses. Functionally, (Microbial infection) Susceptibility host factor required for viral infection (e.g. Potato virus Y (PVY)) by recruiting viral RNAs to the host ribosomal complex via an interaction with viral genome-linked protein (VPg). Displayed sequence is the allele Eva1 that confers resistance to potato virus Y (PVY) by failing to interact with the viral VPg protein. The sequence is that of Eukaryotic translation initiation factor 4E allele Eva1 from Solanum etuberosum (Wild potato).